Here is a 224-residue protein sequence, read N- to C-terminus: Small ribosomal subunit protein uS5 (224 aa).

Positions 1–40 (MAEQPAGGQGAGDSRDSRGDRDSRGRRGDGGRGGRDRDGD) are disordered. The segment covering 13–40 (DSRDSRGDRDSRGRRGDGGRGGRDRDGD) has biased composition (basic and acidic residues). One can recognise an S5 DRBM domain in the interval 44–107 (YLERVVAINR…EEARKGFFRV (64 aa)).

This sequence belongs to the universal ribosomal protein uS5 family. As to quaternary structure, part of the 30S ribosomal subunit. Contacts proteins S4 and S8.

With S4 and S12 plays an important role in translational accuracy. In terms of biological role, located at the back of the 30S subunit body where it stabilizes the conformation of the head with respect to the body. This chain is Small ribosomal subunit protein uS5, found in Mycolicibacterium paratuberculosis (strain ATCC BAA-968 / K-10) (Mycobacterium paratuberculosis).